A 139-amino-acid chain; its full sequence is Transcription antitermination protein NusB (139 aa).

Belongs to the NusB family.

Involved in transcription antitermination. Required for transcription of ribosomal RNA (rRNA) genes. Binds specifically to the boxA antiterminator sequence of the ribosomal RNA (rrn) operons. This chain is Transcription antitermination protein NusB, found in Baumannia cicadellinicola subsp. Homalodisca coagulata.